We begin with the raw amino-acid sequence, 141 residues long: Hemoglobin subunit alpha-D (141 aa).

One can recognise a Globin domain in the interval methionine 1 to arginine 141. 2 residues coordinate heme b: histidine 58 and histidine 87.

It belongs to the globin family. As to quaternary structure, heterotetramer of two alpha-D chains and two beta chains. In terms of tissue distribution, red blood cells.

Functionally, involved in oxygen transport from the lung to the various peripheral tissues. The protein is Hemoglobin subunit alpha-D (HBAD) of Meleagris gallopavo (Wild turkey).